We begin with the raw amino-acid sequence, 63 residues long: Large ribosomal subunit protein bL35 (63 aa).

This sequence belongs to the bacterial ribosomal protein bL35 family.

In Sulfurimonas denitrificans (strain ATCC 33889 / DSM 1251) (Thiomicrospira denitrificans (strain ATCC 33889 / DSM 1251)), this protein is Large ribosomal subunit protein bL35.